A 73-amino-acid chain; its full sequence is U-scoloptoxin(15)-Sa1a (73 aa).

Residues 1–20 (MKFHIIFCLLAALMMTSAFA) form the signal peptide.

This sequence belongs to the scoloptoxin-15 family. In terms of processing, contains 2 disulfide bonds. As to expression, expressed by the venom gland.

Its subcellular location is the secreted. This Scolopendra alternans (Florida Keys giant centipede) protein is U-scoloptoxin(15)-Sa1a.